The sequence spans 511 residues: Exodeoxyribonuclease 7 large subunit (511 aa).

This sequence belongs to the XseA family. As to quaternary structure, heterooligomer composed of large and small subunits.

The protein resides in the cytoplasm. The enzyme catalyses Exonucleolytic cleavage in either 5'- to 3'- or 3'- to 5'-direction to yield nucleoside 5'-phosphates.. Functionally, bidirectionally degrades single-stranded DNA into large acid-insoluble oligonucleotides, which are then degraded further into small acid-soluble oligonucleotides. This Brucella suis biovar 1 (strain 1330) protein is Exodeoxyribonuclease 7 large subunit.